A 261-amino-acid polypeptide reads, in one-letter code: Enolase-phosphatase E1 (261 aa).

Residues Asp-16 and Glu-18 each coordinate Mg(2+). Residues 153–154 (SS) and Lys-187 contribute to the substrate site. Asp-212 is a binding site for Mg(2+).

This sequence belongs to the HAD-like hydrolase superfamily. MasA/MtnC family. In terms of assembly, monomer. Mg(2+) serves as cofactor.

It is found in the cytoplasm. Its subcellular location is the nucleus. It carries out the reaction 5-methylsulfanyl-2,3-dioxopentyl phosphate + H2O = 1,2-dihydroxy-5-(methylsulfanyl)pent-1-en-3-one + phosphate. The protein operates within amino-acid biosynthesis; L-methionine biosynthesis via salvage pathway; L-methionine from S-methyl-5-thio-alpha-D-ribose 1-phosphate: step 3/6. It participates in amino-acid biosynthesis; L-methionine biosynthesis via salvage pathway; L-methionine from S-methyl-5-thio-alpha-D-ribose 1-phosphate: step 4/6. Its function is as follows. Bifunctional enzyme that catalyzes the enolization of 2,3-diketo-5-methylthiopentyl-1-phosphate (DK-MTP-1-P) into the intermediate 2-hydroxy-3-keto-5-methylthiopentenyl-1-phosphate (HK-MTPenyl-1-P), which is then dephosphorylated to form the acireductone 1,2-dihydroxy-3-keto-5-methylthiopentene (DHK-MTPene). The chain is Enolase-phosphatase E1 from Homo sapiens (Human).